The sequence spans 513 residues: Cyclin-dependent kinase C-2 (513 aa).

One can recognise a Protein kinase domain in the interval 25–325 (FEKLEQIGEG…AKDALDAEYF (301 aa)). ATP is bound by residues 31–39 (IGEGTYGQV) and lysine 54. Threonine 35 carries the phosphothreonine modification. A Phosphotyrosine modification is found at tyrosine 36. Aspartate 164 serves as the catalytic Proton acceptor. Position 191 is a phosphoserine (serine 191). Phosphothreonine is present on threonine 198. Positions 336 to 348 (SLPKYEASHEFQT) are enriched in basic and acidic residues. The interval 336-513 (SLPKYEASHE…RNQQQYGNWQ (178 aa)) is disordered. The segment covering 417–433 (PNRYPQGGNQGGYNPNR) has biased composition (low complexity). 2 stretches are compositionally biased toward gly residues: residues 457–478 (GGGM…GVGG) and 485–494 (GPYGASGPGR). A compositionally biased stretch (polar residues) spans 497 to 513 (NYNQGGSRNQQQYGNWQ).

This sequence belongs to the protein kinase superfamily. CMGC Ser/Thr protein kinase family. CDC2/CDKX subfamily.

It catalyses the reaction L-seryl-[protein] + ATP = O-phospho-L-seryl-[protein] + ADP + H(+). It carries out the reaction L-threonyl-[protein] + ATP = O-phospho-L-threonyl-[protein] + ADP + H(+). The enzyme catalyses [DNA-directed RNA polymerase] + ATP = phospho-[DNA-directed RNA polymerase] + ADP + H(+). The sequence is that of Cyclin-dependent kinase C-2 (CDKC-2) from Oryza sativa subsp. japonica (Rice).